The chain runs to 439 residues: GTPase Der (439 aa).

2 consecutive EngA-type G domains span residues 4–166 (PIVA…PAQD) and 175–350 (IRIA…EEAS). Residues 10-17 (GRPNVGKS), 57-61 (DTGGL), 119-122 (NKVE), 181-188 (GRPNVGKS), 228-232 (DTAGM), and 293-296 (NKWD) each bind GTP. The KH-like domain occupies 351-435 (KRVATADLNN…PIRFFLRKRE (85 aa)).

The protein belongs to the TRAFAC class TrmE-Era-EngA-EngB-Septin-like GTPase superfamily. EngA (Der) GTPase family. As to quaternary structure, associates with the 50S ribosomal subunit.

GTPase that plays an essential role in the late steps of ribosome biogenesis. This Desulforamulus reducens (strain ATCC BAA-1160 / DSM 100696 / MI-1) (Desulfotomaculum reducens) protein is GTPase Der.